The sequence spans 149 residues: Nucleoside diphosphate kinase (149 aa).

ATP-binding residues include K9, F57, R85, T91, R102, and N112. The Pros-phosphohistidine intermediate role is filled by H115.

The protein belongs to the NDK family. Homotetramer. Requires Mg(2+) as cofactor.

The protein resides in the cytoplasm. It carries out the reaction a 2'-deoxyribonucleoside 5'-diphosphate + ATP = a 2'-deoxyribonucleoside 5'-triphosphate + ADP. It catalyses the reaction a ribonucleoside 5'-diphosphate + ATP = a ribonucleoside 5'-triphosphate + ADP. In terms of biological role, major role in the synthesis of nucleoside triphosphates other than ATP. The ATP gamma phosphate is transferred to the NDP beta phosphate via a ping-pong mechanism, using a phosphorylated active-site intermediate. In Staphylococcus aureus (strain MSSA476), this protein is Nucleoside diphosphate kinase.